We begin with the raw amino-acid sequence, 287 residues long: Phosphatidylserine decarboxylase proenzyme (287 aa).

Catalysis depends on charge relay system; for autoendoproteolytic cleavage activity residues aspartate 90, histidine 147, and serine 252. Serine 252 acts as the Schiff-base intermediate with substrate; via pyruvic acid; for decarboxylase activity in catalysis. A Pyruvic acid (Ser); by autocatalysis modification is found at serine 252.

Belongs to the phosphatidylserine decarboxylase family. PSD-B subfamily. Prokaryotic type I sub-subfamily. Heterodimer of a large membrane-associated beta subunit and a small pyruvoyl-containing alpha subunit. The cofactor is pyruvate. Is synthesized initially as an inactive proenzyme. Formation of the active enzyme involves a self-maturation process in which the active site pyruvoyl group is generated from an internal serine residue via an autocatalytic post-translational modification. Two non-identical subunits are generated from the proenzyme in this reaction, and the pyruvate is formed at the N-terminus of the alpha chain, which is derived from the carboxyl end of the proenzyme. The autoendoproteolytic cleavage occurs by a canonical serine protease mechanism, in which the side chain hydroxyl group of the serine supplies its oxygen atom to form the C-terminus of the beta chain, while the remainder of the serine residue undergoes an oxidative deamination to produce ammonia and the pyruvoyl prosthetic group on the alpha chain. During this reaction, the Ser that is part of the protease active site of the proenzyme becomes the pyruvoyl prosthetic group, which constitutes an essential element of the active site of the mature decarboxylase.

It is found in the cell membrane. The catalysed reaction is a 1,2-diacyl-sn-glycero-3-phospho-L-serine + H(+) = a 1,2-diacyl-sn-glycero-3-phosphoethanolamine + CO2. It participates in phospholipid metabolism; phosphatidylethanolamine biosynthesis; phosphatidylethanolamine from CDP-diacylglycerol: step 2/2. Its function is as follows. Catalyzes the formation of phosphatidylethanolamine (PtdEtn) from phosphatidylserine (PtdSer). The protein is Phosphatidylserine decarboxylase proenzyme of Pseudomonas entomophila (strain L48).